Consider the following 406-residue polypeptide: Isocitrate dehydrogenase [NADP] (406 aa).

Residues Lys72, Thr75, Thr77, and Arg82 each coordinate NADP(+). Positions 94, 96, 100, 110, and 132 each coordinate D-threo-isocitrate. Mn(2+)-binding residues include Asp250, Asp273, and Asp277. Gly308, Thr309, Val310, His313, and Asn326 together coordinate NADP(+).

It belongs to the isocitrate and isopropylmalate dehydrogenases family. In terms of assembly, homodimer. The cofactor is Mg(2+). Mn(2+) serves as cofactor.

It carries out the reaction D-threo-isocitrate + NADP(+) = 2-oxoglutarate + CO2 + NADPH. In terms of biological role, catalyzes the oxidative decarboxylation of isocitrate to 2-oxoglutarate and carbon dioxide with the concomitant reduction of NADP(+). This is Isocitrate dehydrogenase [NADP] (icd) from Sphingobium yanoikuyae (Sphingomonas yanoikuyae).